A 404-amino-acid polypeptide reads, in one-letter code: Transcriptional repressor OPI1 (404 aa).

A Phosphoserine modification is found at Ser-10. The tract at residues 25–51 (QSCRQKSQPSEDVSQADKMPASESSTT) is disordered. The span at 26–37 (SCRQKSQPSEDV) shows a compositional bias: polar residues. The segment at 109–138 (KRQKLSRAIAKGKDNLKEYKLNMSIESKKR) is basic motif. The interval 139-160 (LVTCLHLLKLANKQLSDKISCL) is leucine-zipper. Disordered stretches follow at residues 170–201 (HPLH…DEEF), 305–327 (LQQQ…SSVT), and 378–404 (QQQQ…DSKD). The segment covering 186–201 (GEDETSSDEDDDDEEF) has biased composition (acidic residues). The FFAT signature appears at 200 to 206 (EFFDASE). The segment covering 378-387 (QQQQYRQQQQ) has biased composition (low complexity). Positions 394–404 (KPSQDNVDSKD) are enriched in polar residues.

Interacts with SCS2.

It localises to the endoplasmic reticulum. The protein localises to the nucleus. In terms of biological role, negative regulator of the transcriptional complex INO2-INO4 in response to phospholipid precursor availability. When precursors become limiting, OPI1 is retained at the endoplasmic reticulum (ER) and INO2-INO4 activates INO1 and other genes required for phospholipid biosynthesis, whereas abundant precursor availability results in targeting of OPI1 to the nucleus to repress transcription of these genes. Binds directly to phosphatidic acid, which is required for ER targeting and may act as sensing mechanism for precursor availability, as phosphatidic acid becomes rapidly depleted upon phospholipid biosynthesis. In Saccharomyces cerevisiae (strain ATCC 204508 / S288c) (Baker's yeast), this protein is Transcriptional repressor OPI1 (OPI1).